A 278-amino-acid chain; its full sequence is Envelope glycoprotein L (278 aa).

The first 30 residues, 1–30 (MCRRPDCGFSFSPGPVILLWCCLLLPIVSS), serve as a signal peptide directing secretion. Residues 43 to 256 (VPAECPELTR…DKYYAGLPPE (214 aa)) form the gL betaherpesvirus-type domain. Cys154 and Cys159 are joined by a disulfide.

This sequence belongs to the herpesviridae glycoprotein L (gL) family. Betaherpesvirinae gL subfamily. As to quaternary structure, interacts with glycoprotein H (gH); this interaction is necessary for the correct processing and cell surface expression of gH. Forms the envelope pentamer complex (PC) composed of gH, gL, UL128, UL130, and UL131A. The pentamer interacts with host NRP2. Forms the envelope trimer complex composed of gH, gL, and gO. The trimer interacts with host PDGFRA. The trimer also interacts with host EPHA2.

The protein resides in the virion membrane. The protein localises to the host cell membrane. Its subcellular location is the host Golgi apparatus. It is found in the host trans-Golgi network. In terms of biological role, the heterodimer glycoprotein H-glycoprotein L is required for the fusion of viral and plasma membranes leading to virus entry into the host cell. Acts as a functional inhibitor of gH and maintains gH in an inhibited form. Upon binding to host integrins, gL dissociates from gH leading to activation of the viral fusion glycoproteins gB and gH. In human cytomegalovirus, forms two distincts complexes to mediate viral entry, a trimer and a pentamer at the surface of the virion envelope. The gH-gL-gO trimer is required for infection in fibroblasts by interacting with host PDGFRA, and in glioblastoma cells by interacting with host EPHA2. The gH-gL-UL128-UL130-UL131A pentamer is essential for viral entry in epithelial, endothelial and myeloid cells via interaction with host NRP2. The polypeptide is Envelope glycoprotein L (Human cytomegalovirus (strain 5160) (HHV-5)).